Consider the following 447-residue polypeptide: N-succinylarginine dihydrolase (447 aa).

Substrate contacts are provided by residues 19-28 (AGLSFGNEAS), Asn-110, and 137-138 (HR). Residue Glu-174 is part of the active site. Arg-212 serves as a coordination point for substrate. Residue His-248 is part of the active site. Residues Asp-250 and Asn-359 each contribute to the substrate site. The active-site Nucleophile is the Cys-365.

It belongs to the succinylarginine dihydrolase family. In terms of assembly, homodimer.

It carries out the reaction N(2)-succinyl-L-arginine + 2 H2O + 2 H(+) = N(2)-succinyl-L-ornithine + 2 NH4(+) + CO2. It functions in the pathway amino-acid degradation; L-arginine degradation via AST pathway; L-glutamate and succinate from L-arginine: step 2/5. Functionally, catalyzes the hydrolysis of N(2)-succinylarginine into N(2)-succinylornithine, ammonia and CO(2). This chain is N-succinylarginine dihydrolase, found in Escherichia coli (strain SMS-3-5 / SECEC).